A 390-amino-acid chain; its full sequence is 3-ketosteroid-9-alpha-monooxygenase, oxygenase component (390 aa).

The region spanning 32–134 (WHCLGLLRDF…TLERNGQLYV (103 aa)) is the Rieske domain. Positions 73, 75, 92, and 95 each coordinate [2Fe-2S] cluster. Residues asparagine 181, histidine 187, histidine 192, and aspartate 311 each coordinate Fe cation.

Homotrimer. The two-component system 3-ketosteroid-9-alpha-monooxygenase is composed of an oxygenase component KshA and a reductase component KshB. [2Fe-2S] cluster serves as cofactor. Requires Fe cation as cofactor.

It catalyses the reaction androsta-1,4-diene-3,17-dione + 2 reduced [2Fe-2S]-[ferredoxin] + O2 + 2 H(+) = 9alpha-hydroxyandrosta-1,4-diene-3,17-dione + 2 oxidized [2Fe-2S]-[ferredoxin] + H2O. Its pathway is steroid metabolism; cholesterol degradation. In terms of biological role, probably involved in the degradation of cholesterol. In vitro, catalyzes the introduction of a 9alpha-hydroxyl moiety into the ring B of 3-ketosteroid substrates such as 1,4-androstadiene-3,17-dione (ADD), 4-androstene-3,17-dione (AD), 4-androstene-17beta-ol-3-one (testosterone), 4-pregnene-3,20-dione (progesterone), 19-nor-4-androstene-3,17-dione, 1-(5alpha)-androstene-3,17-dione, 5alpha-androstane-3,17-dione, 5beta-androstane-3,17-dione, 5alpha-androstane-17beta-ol-3-one (stanolon), 11beta-hydrocortisone, 3-oxo-23,24-bisnorcholesta-4-en-22-oate (4-BNC), 23,24-bisnorcholesta-4-ene-22-oate, 3-oxo-23,24-bisnorcholesta-1,4-dien-22-oate (1,4-BNC) and 3-oxo-23,24-bisnorcholesta-1,4-dien-22-oyl-coenzyme A thioester (1,4-BNC-CoA). KshA5 has the broadest substrate range without a clear substrate preference and is active with Delta-4, Delta-1,4, 5alpha-H and 5beta-H steroids, as well as with steroids having bulky aliphatic side chains and an isopropionyl side chain at C17. This chain is 3-ketosteroid-9-alpha-monooxygenase, oxygenase component, found in Rhodococcus rhodochrous.